Here is a 623-residue protein sequence, read N- to C-terminus: Glutamyl-tRNA(Gln) amidotransferase subunit E (623 aa).

It belongs to the GatB/GatE family. GatE subfamily. As to quaternary structure, heterodimer of GatD and GatE.

The enzyme catalyses L-glutamyl-tRNA(Gln) + L-glutamine + ATP + H2O = L-glutaminyl-tRNA(Gln) + L-glutamate + ADP + phosphate + H(+). In terms of biological role, allows the formation of correctly charged Gln-tRNA(Gln) through the transamidation of misacylated Glu-tRNA(Gln) in organisms which lack glutaminyl-tRNA synthetase. The reaction takes place in the presence of glutamine and ATP through an activated gamma-phospho-Glu-tRNA(Gln). The GatDE system is specific for glutamate and does not act on aspartate. The protein is Glutamyl-tRNA(Gln) amidotransferase subunit E of Haloarcula marismortui (strain ATCC 43049 / DSM 3752 / JCM 8966 / VKM B-1809) (Halobacterium marismortui).